We begin with the raw amino-acid sequence, 92 residues long: DNA-directed RNA polymerase subunit Rpo11 (92 aa).

This sequence belongs to the archaeal Rpo11/eukaryotic RPB11/RPC19 RNA polymerase subunit family. In terms of assembly, part of the RNA polymerase complex.

Its subcellular location is the cytoplasm. It carries out the reaction RNA(n) + a ribonucleoside 5'-triphosphate = RNA(n+1) + diphosphate. Its function is as follows. DNA-dependent RNA polymerase (RNAP) catalyzes the transcription of DNA into RNA using the four ribonucleoside triphosphates as substrates. This Methanosarcina barkeri (strain Fusaro / DSM 804) protein is DNA-directed RNA polymerase subunit Rpo11.